The primary structure comprises 632 residues: Bifunctional protein GlmU (632 aa).

The interval 1–229 is pyrophosphorylase; the sequence is MAERELSVAI…PQEIVGVNDR (229 aa). UDP-N-acetyl-alpha-D-glucosamine contacts are provided by residues 11 to 14, K25, Q76, and 81 to 82; these read LAAG and GT. Residue D106 coordinates Mg(2+). UDP-N-acetyl-alpha-D-glucosamine is bound by residues G143, E158, N173, and N227. Mg(2+) is bound at residue N227. A linker region spans residues 230-250; that stretch reads RQLAQAYQILQDRLKEAWMEA. Residues 251–632 form an N-acetyltransferase region; that stretch reads GVTFVDPDSS…ADNSRPKSLQ (382 aa). Positions 332 and 350 each coordinate UDP-N-acetyl-alpha-D-glucosamine. The active-site Proton acceptor is the H362. UDP-N-acetyl-alpha-D-glucosamine is bound by residues Y365 and N376. Residues A379, 385-386, A422, and R441 each bind acetyl-CoA; that span reads NY. The tract at residues 600–632 is disordered; it reads VAGDPCWPSPPPQPQQNQQTKPEADNSRPKSLQ. Basic and acidic residues predominate over residues 621–632; sequence PEADNSRPKSLQ.

This sequence in the N-terminal section; belongs to the N-acetylglucosamine-1-phosphate uridyltransferase family. In the C-terminal section; belongs to the transferase hexapeptide repeat family. In terms of assembly, homotrimer. The cofactor is Mg(2+).

It is found in the cytoplasm. It carries out the reaction alpha-D-glucosamine 1-phosphate + acetyl-CoA = N-acetyl-alpha-D-glucosamine 1-phosphate + CoA + H(+). It catalyses the reaction N-acetyl-alpha-D-glucosamine 1-phosphate + UTP + H(+) = UDP-N-acetyl-alpha-D-glucosamine + diphosphate. It participates in nucleotide-sugar biosynthesis; UDP-N-acetyl-alpha-D-glucosamine biosynthesis; N-acetyl-alpha-D-glucosamine 1-phosphate from alpha-D-glucosamine 6-phosphate (route II): step 2/2. Its pathway is nucleotide-sugar biosynthesis; UDP-N-acetyl-alpha-D-glucosamine biosynthesis; UDP-N-acetyl-alpha-D-glucosamine from N-acetyl-alpha-D-glucosamine 1-phosphate: step 1/1. It functions in the pathway bacterial outer membrane biogenesis; LPS lipid A biosynthesis. Its function is as follows. Catalyzes the last two sequential reactions in the de novo biosynthetic pathway for UDP-N-acetylglucosamine (UDP-GlcNAc). The C-terminal domain catalyzes the transfer of acetyl group from acetyl coenzyme A to glucosamine-1-phosphate (GlcN-1-P) to produce N-acetylglucosamine-1-phosphate (GlcNAc-1-P), which is converted into UDP-GlcNAc by the transfer of uridine 5-monophosphate (from uridine 5-triphosphate), a reaction catalyzed by the N-terminal domain. This Synechococcus sp. (strain JA-2-3B'a(2-13)) (Cyanobacteria bacterium Yellowstone B-Prime) protein is Bifunctional protein GlmU.